The following is a 273-amino-acid chain: 4-hydroxy-tetrahydrodipicolinate reductase (273 aa).

NAD(+) is bound by residues Gly11 to Met16 and Gly106 to Thr108. Residue His162 is the Proton donor/acceptor of the active site. A (S)-2,3,4,5-tetrahydrodipicolinate-binding site is contributed by His163. Residue Lys166 is the Proton donor of the active site. Position 172–173 (Gly172–Thr173) interacts with (S)-2,3,4,5-tetrahydrodipicolinate.

Belongs to the DapB family.

The protein resides in the cytoplasm. It carries out the reaction (S)-2,3,4,5-tetrahydrodipicolinate + NAD(+) + H2O = (2S,4S)-4-hydroxy-2,3,4,5-tetrahydrodipicolinate + NADH + H(+). The enzyme catalyses (S)-2,3,4,5-tetrahydrodipicolinate + NADP(+) + H2O = (2S,4S)-4-hydroxy-2,3,4,5-tetrahydrodipicolinate + NADPH + H(+). The protein operates within amino-acid biosynthesis; L-lysine biosynthesis via DAP pathway; (S)-tetrahydrodipicolinate from L-aspartate: step 4/4. Catalyzes the conversion of 4-hydroxy-tetrahydrodipicolinate (HTPA) to tetrahydrodipicolinate. The chain is 4-hydroxy-tetrahydrodipicolinate reductase from Synechococcus sp. (strain ATCC 27144 / PCC 6301 / SAUG 1402/1) (Anacystis nidulans).